Reading from the N-terminus, the 644-residue chain is NADH-ubiquinone oxidoreductase chain 5 (644 aa).

18 consecutive transmembrane segments (helical) span residues 4-23 (FITL…RYIG), 30-49 (LNII…YINI), 78-100 (DLLS…IFAW), 112-129 (FYTY…LVLG), 133-155 (LILF…FWYN), 167-189 (LFIN…YIYK), 199-221 (LVSY…AASA), 234-256 (WAMA…IAGI), 271-293 (NILL…IAIN), 300-322 (IIAL…SSYN), 327-349 (HVLC…IHSL), 361-383 (GLLI…LMGL), 398-420 (SSIG…SSLL), 466-488 (SWMA…YLLQ), 517-539 (INIY…IIYL), 546-568 (LLYI…RFLF), 594-616 (GFLY…FNII), and 623-642 (FNHY…YLQF).

The protein belongs to the complex I subunit 5 family.

The protein resides in the mitochondrion inner membrane. It catalyses the reaction a ubiquinone + NADH + 5 H(+)(in) = a ubiquinol + NAD(+) + 4 H(+)(out). In terms of biological role, core subunit of the mitochondrial membrane respiratory chain NADH dehydrogenase (Complex I) that is believed to belong to the minimal assembly required for catalysis. Complex I functions in the transfer of electrons from NADH to the respiratory chain. The immediate electron acceptor for the enzyme is believed to be ubiquinone. The sequence is that of NADH-ubiquinone oxidoreductase chain 5 (ND5) from Wickerhamomyces canadensis (Yeast).